A 306-amino-acid chain; its full sequence is Nod factor export ATP-binding protein I (306 aa).

One can recognise an ABC transporter domain in the interval 8–238 (IDLVGVRKSF…HIGCNVIEIY (231 aa)). ATP is bound at residue 40–47 (GPNGAGKS).

Belongs to the ABC transporter superfamily. Lipooligosaccharide exporter (TC 3.A.1.102) family. In terms of assembly, the complex is composed of two ATP-binding proteins (NodI) and two transmembrane proteins (NodJ).

The protein resides in the cell inner membrane. Its function is as follows. Part of the ABC transporter complex NodIJ involved in the export of the nodulation factors (Nod factors), the bacterial signal molecules that induce symbiosis and subsequent nodulation induction. Nod factors are LCO (lipo-chitin oligosaccharide), a modified beta-1,4-linked N-acetylglucosamine oligosaccharide. This subunit is responsible for energy coupling to the transport system. In Bradyrhizobium diazoefficiens (strain JCM 10833 / BCRC 13528 / IAM 13628 / NBRC 14792 / USDA 110), this protein is Nod factor export ATP-binding protein I.